Reading from the N-terminus, the 1676-residue chain is Anucleate primary sterigmata protein A (1676 aa).

Polar residues predominate over residues 1 to 11 (MEDSQRGNASM). A disordered region spans residues 1–35 (MEDSQRGNASMMSMMDDPFVVSPEGARDPPSTNQY). Residues 51–127 (AQAKRALEAH…EIGQETARAF (77 aa)) adopt a coiled-coil conformation. Disordered stretches follow at residues 160-180 (QATN…NQSN), 353-394 (RLRQ…TPRH), 439-712 (DEVE…SRRP), 1027-1050 (GTST…PVEP), 1176-1201 (PLGA…DQGA), 1220-1270 (VRPL…QASS), and 1297-1354 (PASA…RRSS). Over residues 163–172 (NSPSKVSVPS) the composition is skewed to low complexity. Coiled coils occupy residues 193–359 (TSLL…QQEA) and 408–453 (HAHR…AANG). 5 stretches are compositionally biased toward basic and acidic residues: residues 355–370 (RQQE…RPHD), 439–448 (DEVEQRRRDS), 461–470 (TKAETRKPAR), 479–489 (KKAEVEIHDSD), and 503–522 (ASND…RSDA). Over residues 593–602 (SYYSTASTSA) the composition is skewed to low complexity. Polar residues predominate over residues 609-620 (DPGTPSISQFST). The segment covering 623-636 (YRLRKKRSVLRKIR) has biased composition (basic residues). Residues 647–664 (SRPSSARESPSTSFTRDT) are compositionally biased toward polar residues. The span at 678 to 687 (AEVDGDEDDF) shows a compositional bias: acidic residues. The span at 1032 to 1042 (TVEFSVSSISS) shows a compositional bias: low complexity. Over residues 1191-1201 (SGSSNQADQGA) the composition is skewed to polar residues. A compositionally biased stretch (polar residues) spans 1314–1341 (RASSQQRPRTPNESALQVGSAKTTTSRA). The 112-residue stretch at 1393 to 1504 (QTMIGEFLWK…WFNALSYLLV (112 aa)) folds into the PH domain. Acidic residues predominate over residues 1511–1524 (EEAENGVTLDDIDE). Disordered regions lie at residues 1511 to 1589 (EEAE…QASS) and 1654 to 1676 (HDVS…HSHH). Composition is skewed to polar residues over residues 1534–1548 (RQTA…QSRG) and 1580–1589 (YSDQARQASS).

It is found in the membrane. In terms of biological role, required for nuclear positioning and completion of asexual development. This chain is Anucleate primary sterigmata protein A (apsA), found in Emericella nidulans (strain FGSC A4 / ATCC 38163 / CBS 112.46 / NRRL 194 / M139) (Aspergillus nidulans).